We begin with the raw amino-acid sequence, 141 residues long: Nucleoside triphosphatase NudI (141 aa).

The 141-residue stretch at 1–141 (MRQRTIVCPL…RHTLRLKGLL (141 aa)) folds into the Nudix hydrolase domain. The short motif at 38-59 (GGVEPGERIEEALRREIREELG) is the Nudix box element.

This sequence belongs to the Nudix hydrolase family. NudI subfamily. In terms of assembly, monomer. It depends on Mg(2+) as a cofactor.

The enzyme catalyses a ribonucleoside 5'-triphosphate + H2O = a ribonucleoside 5'-phosphate + diphosphate + H(+). The catalysed reaction is a 2'-deoxyribonucleoside 5'-triphosphate + H2O = a 2'-deoxyribonucleoside 5'-phosphate + diphosphate + H(+). It carries out the reaction dUTP + H2O = dUMP + diphosphate + H(+). It catalyses the reaction dTTP + H2O = dTMP + diphosphate + H(+). The enzyme catalyses dCTP + H2O = dCMP + diphosphate + H(+). Its function is as follows. Catalyzes the hydrolysis of nucleoside triphosphates, with a preference for pyrimidine deoxynucleoside triphosphates (dUTP, dTTP and dCTP). This chain is Nucleoside triphosphatase NudI, found in Salmonella arizonae (strain ATCC BAA-731 / CDC346-86 / RSK2980).